The primary structure comprises 88 residues: Small ribosomal subunit protein uS17c (88 aa).

This sequence belongs to the universal ribosomal protein uS17 family. In terms of assembly, part of the 30S ribosomal subunit.

The protein resides in the plastid. Its subcellular location is the cyanelle. One of the primary rRNA binding proteins, it binds specifically to the 5'-end of 16S ribosomal RNA. This chain is Small ribosomal subunit protein uS17c (rps17), found in Cyanophora paradoxa.